Consider the following 411-residue polypeptide: Floricaula/leafy-like protein (411 aa).

The disordered stretch occupies residues 220–259; that stretch reads PDTNYGSEQTKACKKQKRRRSKDSGEDGEERQREHPFIVT. Residues 231-240 show a composition bias toward basic residues; it reads ACKKQKRRRS. Residues 241 to 255 are compositionally biased toward basic and acidic residues; that stretch reads KDSGEDGEERQREHP. DNA-binding regions lie at residues 252–256, 321–328, and 392–395; these read REHPF, NKPKMRHY, and YVPT.

The protein belongs to the FLO/LFY family. In terms of tissue distribution, expressed in vegetative buds and male cones but not in female cones, vascular tissue, roots or secondary needles.

The protein resides in the nucleus. Probable transcription factor. In Pinus radiata (Monterey pine), this protein is Floricaula/leafy-like protein (FLL).